Reading from the N-terminus, the 243-residue chain is UPF0173 metal-dependent hydrolase Xaut_3786 (243 aa).

It belongs to the UPF0173 family.

The sequence is that of UPF0173 metal-dependent hydrolase Xaut_3786 from Xanthobacter autotrophicus (strain ATCC BAA-1158 / Py2).